The primary structure comprises 95 residues: Opiscorpine-3 (95 aa).

Residues 1 to 19 form the signal peptide; that stretch reads MNNKLTALIFLGLLAIASC. Residues 55–95 enclose the BetaSPN-type CS-alpha/beta domain; the sequence is EFMCVANVDMTKSCDTHCQKASGEKGYCHGTKCKCGVPLSY. 3 cysteine pairs are disulfide-bonded: Cys-58–Cys-82, Cys-68–Cys-87, and Cys-72–Cys-89.

Belongs to the long chain scorpion toxin family. Class 3 subfamily. Expressed by the venom gland.

It localises to the secreted. In terms of biological role, has antimicrobial activity against yeasts and bacteria. This Opistophthalmus carinatus (African yellow leg scorpion) protein is Opiscorpine-3.